We begin with the raw amino-acid sequence, 950 residues long: uncharacterized protein (950 aa).

This is an uncharacterized protein from Rickettsia prowazekii (strain Madrid E).